A 198-amino-acid polypeptide reads, in one-letter code: Recombination protein RecR (198 aa).

The C4-type zinc-finger motif lies at 56–71; sequence CKVCGNFSEEDECVIC. The region spanning 79–174 is the Toprim domain; the sequence is GVICVVEEPK…RVSKLASGLP (96 aa).

It belongs to the RecR family.

May play a role in DNA repair. It seems to be involved in an RecBC-independent recombinational process of DNA repair. It may act with RecF and RecO. In Tropheryma whipplei (strain TW08/27) (Whipple's bacillus), this protein is Recombination protein RecR.